A 496-amino-acid polypeptide reads, in one-letter code: Pyrrole-2-carboxylic acid decarboxylase (496 aa).

Trp166 lines the K(+) pocket. Prenylated FMN-binding residues include Val168, Arg170, Gln187, and His188. Residue His188 coordinates Mn(2+). K(+) contacts are provided by Ala218, Ala219, Met221, and Glu229. Glu229 serves as a coordination point for prenylated FMN. Glu229 is a binding site for Mn(2+). The active-site Proton donor is the Glu278. Residue His386 participates in prenylated FMN binding.

This sequence belongs to the UbiD family. UbiD-like/FDC subfamily. Homodimer. The cofactor is prenylated FMN. It depends on Mn(2+) as a cofactor. K(+) is required as a cofactor.

The enzyme catalyses pyrrole-2-carboxylate + H(+) = 1H-pyrrole + CO2. It carries out the reaction pyrrole-2-carboxylate + H2O = 1H-pyrrole + hydrogencarbonate. Imidazole acts as a reversible inhibitor via the formation of an imidazole-prenyl-FMN adduct. Activity is light sensitive. Catalyzes the prenyl-FMN-dependent decarboxylation of pyrrole-2-carboxylate (P2C). Can also catalyze the carboxylation of pyrrole in the presence of elevated concentrations of CO(2) or bicarbonate. Can accept a modest range of heteroaromatic compounds such as 3-methylpyrrole-2-carboxylate, indole-3-carboxylate and furan-2-carboxylate, and shows very low activity with thiophene-2-carboxylate. Attenuates the virulence of P.aeruginosa in a Drosophila model when overexpressed. The chain is Pyrrole-2-carboxylic acid decarboxylase from Pseudomonas aeruginosa (strain ATCC 15692 / DSM 22644 / CIP 104116 / JCM 14847 / LMG 12228 / 1C / PRS 101 / PAO1).